Here is a 230-residue protein sequence, read N- to C-terminus: Phosphoribosylformylglycinamidine synthase subunit PurQ (230 aa).

One can recognise a Glutamine amidotransferase type-1 domain in the interval 2-230; it reads KIAVTKFLGT…KGMIDYAKRI (229 aa). The active-site Nucleophile is Cys-85. Catalysis depends on residues His-202 and Glu-204.

In terms of assembly, part of the FGAM synthase complex composed of 1 PurL, 1 PurQ and 2 PurS subunits.

It localises to the cytoplasm. It carries out the reaction N(2)-formyl-N(1)-(5-phospho-beta-D-ribosyl)glycinamide + L-glutamine + ATP + H2O = 2-formamido-N(1)-(5-O-phospho-beta-D-ribosyl)acetamidine + L-glutamate + ADP + phosphate + H(+). The catalysed reaction is L-glutamine + H2O = L-glutamate + NH4(+). It participates in purine metabolism; IMP biosynthesis via de novo pathway; 5-amino-1-(5-phospho-D-ribosyl)imidazole from N(2)-formyl-N(1)-(5-phospho-D-ribosyl)glycinamide: step 1/2. Functionally, part of the phosphoribosylformylglycinamidine synthase complex involved in the purines biosynthetic pathway. Catalyzes the ATP-dependent conversion of formylglycinamide ribonucleotide (FGAR) and glutamine to yield formylglycinamidine ribonucleotide (FGAM) and glutamate. The FGAM synthase complex is composed of three subunits. PurQ produces an ammonia molecule by converting glutamine to glutamate. PurL transfers the ammonia molecule to FGAR to form FGAM in an ATP-dependent manner. PurS interacts with PurQ and PurL and is thought to assist in the transfer of the ammonia molecule from PurQ to PurL. This is Phosphoribosylformylglycinamidine synthase subunit PurQ from Methanocaldococcus jannaschii (strain ATCC 43067 / DSM 2661 / JAL-1 / JCM 10045 / NBRC 100440) (Methanococcus jannaschii).